The primary structure comprises 1424 residues: Serine/threonine-protein kinase LMTK3 (1424 aa).

The signal sequence occupies residues 1-20 (MPAPGALILLAAVSASGCLA). A helical transmembrane segment spans residues 40–60 (AVVLISCSGLLAFIFLLLTCL). The tract at residues 74-95 (NPEGEDCSGEYTPPAEETSSSQ) is disordered. The 279-residue stretch at 133-411 (LSYLQEIGSG…SDLQLQLTYL (279 aa)) folds into the Protein kinase domain. ATP is bound by residues 139–147 (IGSGWFGKV) and Lys-164. Ser-232 carries the phosphoserine modification. Residue Asp-266 is the Proton acceptor of the active site. 2 disordered regions span residues 413–465 (SERP…PDDV) and 486–516 (RGAGRGGGAPPWQPASAPPAPHTNPSNPFYE). The segment covering 418–439 (RPPPPPPPPRDGPFPWPWPPSH) has biased composition (pro residues). An Omega-N-methylarginine modification is found at Arg-490. The span at 496–507 (PWQPASAPPAPH) shows a compositional bias: pro residues. A phosphoserine mark is found at Ser-531 and Ser-535. Disordered stretches follow at residues 544-666 (EHGS…PLPC), 680-964 (LERG…MSPE), 976-1024 (MSPK…APET), 1041-1313 (GLEM…RKRK), and 1325-1424 (LFDQ…PVEN). Residues 571–584 (QTPSEVPQLVSETW) are compositionally biased toward polar residues. Residues 638–647 (AEEEEEESSP) show a composition bias toward acidic residues. A compositionally biased stretch (basic and acidic residues) spans 700 to 713 (PPEDDSSLRAERGS). Residues 744 to 758 (RGPPPAPPPPPPPPR) are compositionally biased toward pro residues. The segment covering 759–791 (ASAEPAASPDPPSALASPGSGLSSPGPKPGDSG) has biased composition (low complexity). The segment covering 818 to 841 (PRAPPEPPDPGAPRPPPDPGPLPL) has biased composition (pro residues). A compositionally biased stretch (basic and acidic residues) spans 935-954 (DMKEKVAENGLESPEKEERA). Residues Ser-947, Ser-962, and Ser-977 each carry the phosphoserine modification. Basic and acidic residues predominate over residues 994–1004 (RNTERPPEIGP). Residues 1084–1094 (GSGGRALGGVG) are compositionally biased toward gly residues. Low complexity predominate over residues 1095 to 1105 (TAPAGGPASAV). The span at 1167–1177 (DPLKPERKGPE) shows a compositional bias: basic and acidic residues. Low complexity predominate over residues 1200–1213 (SRLSLALPPLTLTP). Residues 1231–1241 (AAGGEAGGAGA) show a composition bias toward gly residues. Residues 1245-1261 (AEEDGEDEDEDEEDEEA) show a composition bias toward acidic residues. Residues 1262–1272 (AGSRDPGRTRE) are compositionally biased toward basic and acidic residues. Positions 1329–1339 (ETPTNELSVQG) are enriched in polar residues. The segment covering 1348 to 1360 (STPPAPPTPPHPT) has biased composition (pro residues).

This sequence belongs to the protein kinase superfamily. Tyr protein kinase family. Interacts with ESR1. Interacts with AP-2 complex subunit alpha. The cofactor is Mg(2+). Autophosphorylated. As to expression, expressed in brain. Predominantly expressed in cerebral cortex, thalamus, the cerebellum and hippocampal formation (at protein level).

It is found in the membrane. The protein localises to the cell projection. The protein resides in the axon. Its subcellular location is the dendrite. It localises to the golgi apparatus membrane. It carries out the reaction L-seryl-[protein] + ATP = O-phospho-L-seryl-[protein] + ADP + H(+). It catalyses the reaction L-threonyl-[protein] + ATP = O-phospho-L-threonyl-[protein] + ADP + H(+). Its function is as follows. Protein kinase which phosphorylates ESR1 (in vitro) and protects it against proteasomal degradation. May also regulate ESR1 levels indirectly via a PKC-AKT-FOXO3 pathway where it decreases the activity of PKC and the phosphorylation of AKT, thereby increasing binding of transcriptional activator FOXO3 to the ESR1 promoter and increasing ESR1 transcription. Involved in endocytic trafficking of N-methyl-D-aspartate receptors (NMDAR) in neurons. This chain is Serine/threonine-protein kinase LMTK3 (Lmtk3), found in Mus musculus (Mouse).